We begin with the raw amino-acid sequence, 635 residues long: Biosynthetic arginine decarboxylase (635 aa).

The residue at position 100 (Lys-100) is an N6-(pyridoxal phosphate)lysine. 282–292 lines the substrate pocket; the sequence is LDIGGGLGVDY.

It belongs to the Orn/Lys/Arg decarboxylase class-II family. SpeA subfamily. Mg(2+) serves as cofactor. It depends on pyridoxal 5'-phosphate as a cofactor.

It carries out the reaction L-arginine + H(+) = agmatine + CO2. It functions in the pathway amine and polyamine biosynthesis; agmatine biosynthesis; agmatine from L-arginine: step 1/1. In terms of biological role, catalyzes the biosynthesis of agmatine from arginine. The polypeptide is Biosynthetic arginine decarboxylase (Trichlorobacter lovleyi (strain ATCC BAA-1151 / DSM 17278 / SZ) (Geobacter lovleyi)).